We begin with the raw amino-acid sequence, 117 residues long: UPF0342 protein Bcer98_0695 (117 aa).

Belongs to the UPF0342 family.

The sequence is that of UPF0342 protein Bcer98_0695 from Bacillus cytotoxicus (strain DSM 22905 / CIP 110041 / 391-98 / NVH 391-98).